The following is a 151-amino-acid chain: UPF0336 protein Franean1_6066 (151 aa).

The region spanning 8–127 (VGRSYTSDVP…NEVLVTSYEF (120 aa)) is the MaoC-like domain.

It belongs to the UPF0336 family.

The polypeptide is UPF0336 protein Franean1_6066 (Parafrankia sp. (strain EAN1pec)).